Reading from the N-terminus, the 495-residue chain is Neuronal acetylcholine receptor subunit beta-4 (495 aa).

Positions 1–20 are cleaved as a signal peptide; sequence MRGTPLLLVSLFSLLQDGDC. At 21-235 the chain is on the extracellular side; the sequence is RLANAEEKLM…IIKRKPLFYT (215 aa). 4 N-linked (GlcNAc...) asparagine glycosylation sites follow: asparagine 35, asparagine 92, asparagine 137, and asparagine 165. A disulfide bond links cysteine 152 and cysteine 166. Residues 236 to 256 traverse the membrane as a helical segment; it reads INLIIPCVLITSLAILVFYLP. At 257–264 the chain is on the cytoplasmic side; sequence SDCGEKMT. A Na(+)-binding site is contributed by glutamate 261. The chain crosses the membrane as a helical span at residues 265–285; the sequence is LCISVLLALTFFLLLISKIVP. Topologically, residues 286-297 are extracellular; the sequence is PTSLDIPLIGKY. A helical membrane pass occupies residues 298 to 318; it reads LLFTMVLVTFSIVTTVCVLNV. Residues 319–463 are Cytoplasmic-facing; sequence HHRSPSTHTM…WKFVAMVVDR (145 aa). Residues 464–484 form a helical membrane-spanning segment; it reads LFLWVFVFVCILGTMGLFLPP. At 485–495 the chain is on the extracellular side; that stretch reads LFQIHAPSKDS.

This sequence belongs to the ligand-gated ion channel (TC 1.A.9) family. Acetylcholine receptor (TC 1.A.9.1) subfamily. Beta-4/CHRNB4 sub-subfamily. Neuronal AChR is composed of two different types of subunits: alpha and beta. CHRNB4/Beta-4 subunit can be combined to CHRNA2/alpha-2, CHRNA3/alpha-3 or CHRNA4/alpha-4, CHRNA5/alpha-5 and CHRNB3/beta-3 to give rise to functional receptors. Forms stoichiometries such as (CHRNA3)2:(CHRNB4)3 or (CHRNA3:CHRNB4)2:CHRNB3. Interacts with RIC3; which is required for proper folding and assembly. Interacts with LYPD6. In terms of tissue distribution, in the brain, it is detected in the medial habenula. In the peripheral nervous system, it is found at least in the adrenal gland.

It localises to the synaptic cell membrane. It is found in the cell membrane. It carries out the reaction Ca(2+)(in) = Ca(2+)(out). It catalyses the reaction K(+)(in) = K(+)(out). The catalysed reaction is Na(+)(in) = Na(+)(out). Activated by a myriad of ligands such as acetylcholine, cytisine, nicotine, choline and epibatidine. nAChR activity is inhibited by the antagonist alpha-conotoxins BuIA and MII, small disulfide-constrained peptides from cone snails. The heteropentamer CHRNA3:CHRNB4 activity is blocked by the alpha-conotoxin ImI and AuIB. Component of neuronal acetylcholine receptors (nAChRs) that function as pentameric, ligand-gated cation channels with high calcium permeability among other activities. nAChRs are excitatory neurotrasnmitter receptors formed by a collection of nAChR subunits known to mediate synaptic transmission in the nervous system and the neuromuscular junction. Each nAchR subunit confers differential attributes to channel properties, including activation, deactivation and desensitization kinetics, pH sensitivity, cation permeability, and binding to allosteric modulators. CHRNB4 forms heteropentameric neuronal acetylcholine receptors with CHRNA2, CHRNA3 and CHRNA4, as well as CHRNA5 and CHRNB3 as accesory subunits. CHRNA3:CHRNB4 being predominant in neurons of the autonomic ganglia, it is known as ganglionic nicotinic receptor. CHRNA3:CHRNB4 or CHRNA3:CHRNA5:CHRNB4 play also an important role in the habenulo-interpeduncular tract, modulating the mesolimbic dopamine system and affecting reward circuits and addiction. Hypothalamic CHRNA3:CHRNB4 nAChR activation by nicotine leads to activation of POMC neurons and a decrease in food intake. This Rattus norvegicus (Rat) protein is Neuronal acetylcholine receptor subunit beta-4 (Chrnb4).